The primary structure comprises 955 residues: Glycine dehydrogenase (decarboxylating) (955 aa).

Lysine 705 carries the N6-(pyridoxal phosphate)lysine modification.

Belongs to the GcvP family. The glycine cleavage system is composed of four proteins: P, T, L and H. Pyridoxal 5'-phosphate is required as a cofactor.

It carries out the reaction N(6)-[(R)-lipoyl]-L-lysyl-[glycine-cleavage complex H protein] + glycine + H(+) = N(6)-[(R)-S(8)-aminomethyldihydrolipoyl]-L-lysyl-[glycine-cleavage complex H protein] + CO2. The glycine cleavage system catalyzes the degradation of glycine. The P protein binds the alpha-amino group of glycine through its pyridoxal phosphate cofactor; CO(2) is released and the remaining methylamine moiety is then transferred to the lipoamide cofactor of the H protein. This is Glycine dehydrogenase (decarboxylating) from Aliivibrio salmonicida (strain LFI1238) (Vibrio salmonicida (strain LFI1238)).